A 78-amino-acid polypeptide reads, in one-letter code: HssA/B-like protein 29 (78 aa).

Residues 1-31 form a disordered region; it reads MTLFSSITSISKTNTSSKSSLNSFSGSSLSM.

This sequence belongs to the hssA/B family.

In Dictyostelium discoideum (Social amoeba), this protein is HssA/B-like protein 29 (hssl29).